Consider the following 251-residue polypeptide: Ferritin-1, chloroplastic (251 aa).

The transit peptide at 1 to 45 (MLLKAAPAFALLNTQGENLSPLFSSSKSFSPKNGNRFVVSASKAT) directs the protein to the chloroplast. The tract at residues 46 to 78 (NHKPLTGVVFEPFEELKKELMLVPAVPDTSLCR) is extension peptide (EP). In terms of domain architecture, Ferritin-like diiron spans 79–232 (QKYSDDCEAA…EYVAQLRRVG (154 aa)). Positions 96, 131, 134, 180, and 214 each coordinate Fe cation.

The protein belongs to the ferritin family. As to quaternary structure, oligomer of 24 subunits. There are two types of subunits: L (light) chain and H (heavy) chain. The major chain can be light or heavy, depending on the species and tissue type. The functional molecule forms a roughly spherical shell with a diameter of 12 nm and contains a central cavity into which the insoluble mineral iron core is deposited.

Its subcellular location is the plastid. It localises to the chloroplast. It carries out the reaction 4 Fe(2+) + O2 + 4 H(+) = 4 Fe(3+) + 2 H2O. In terms of biological role, stores iron in a soluble, non-toxic, readily available form. Important for iron homeostasis. Has ferroxidase activity. Iron is taken up in the ferrous form and deposited as ferric hydroxides after oxidation. This chain is Ferritin-1, chloroplastic (FER1), found in Nicotiana tabacum (Common tobacco).